A 515-amino-acid polypeptide reads, in one-letter code: Probable multifunctional siroheme biosynthesis protein HemA (515 aa).

NAD(+)-binding positions include 26–27 (SL) and 47–48 (IR). The segment at 26–174 (SLDYKSAAID…TAAKKAKTEI (149 aa)) is glutamyl-tRNA reductase. L-glutamyl-tRNA(Glu)-binding positions include 68-71 (TCNR), S127, E132, and Q138. C69 serves as the catalytic Nucleophile. 206-211 (GNGEIG) contacts NADP(+). Positions 367–507 (FPLFIDLSGK…SLVKSVAEQI (141 aa)) are precorrin-2 dehydrogenase /sirohydrochlorin ferrochelatase.

This sequence in the N-terminal section; belongs to the glutamyl-tRNA reductase family. In the C-terminal section; belongs to the precorrin-2 dehydrogenase / sirohydrochlorin ferrochelatase family. In terms of assembly, homodimer.

It catalyses the reaction (S)-4-amino-5-oxopentanoate + tRNA(Glu) + NADP(+) = L-glutamyl-tRNA(Glu) + NADPH + H(+). The catalysed reaction is precorrin-2 + NAD(+) = sirohydrochlorin + NADH + 2 H(+). The enzyme catalyses siroheme + 2 H(+) = sirohydrochlorin + Fe(2+). The protein operates within cofactor biosynthesis; adenosylcobalamin biosynthesis; sirohydrochlorin from precorrin-2: step 1/1. It functions in the pathway porphyrin-containing compound metabolism; siroheme biosynthesis; siroheme from sirohydrochlorin: step 1/1. Its pathway is porphyrin-containing compound metabolism; siroheme biosynthesis; sirohydrochlorin from precorrin-2: step 1/1. It participates in porphyrin-containing compound metabolism; protoporphyrin-IX biosynthesis; 5-aminolevulinate from L-glutamyl-tRNA(Glu): step 1/2. In terms of biological role, multifunctional enzyme that catalyzes the NADPH-dependent reduction of glutamyl-tRNA(Glu) to glutamate 1-semialdehyde (GSA), the NAD-dependent ring dehydrogenation of precorrin-2 to sirohydrochlorin and finally, the ferrochelation of sirohydrochlorin to yield siroheme. This Ruminiclostridium josui (Clostridium josui) protein is Probable multifunctional siroheme biosynthesis protein HemA.